A 76-amino-acid polypeptide reads, in one-letter code: uncharacterized protein (76 aa).

This is an uncharacterized protein from Escherichia coli (strain K12).